Here is a 160-residue protein sequence, read N- to C-terminus: Cytochrome b6-f complex subunit 4 (160 aa).

Transmembrane regions (helical) follow at residues 36-56 (LLYI…GLAV), 95-115 (LLGI…PFIE), and 128-148 (IAMS…IGAC).

This sequence belongs to the cytochrome b family. PetD subfamily. The 4 large subunits of the cytochrome b6-f complex are cytochrome b6, subunit IV (17 kDa polypeptide, PetD), cytochrome f and the Rieske protein, while the 4 small subunits are PetG, PetL, PetM and PetN. The complex functions as a dimer.

The protein localises to the cellular thylakoid membrane. Its function is as follows. Component of the cytochrome b6-f complex, which mediates electron transfer between photosystem II (PSII) and photosystem I (PSI), cyclic electron flow around PSI, and state transitions. This chain is Cytochrome b6-f complex subunit 4, found in Prochlorococcus marinus (strain MIT 9301).